A 118-amino-acid polypeptide reads, in one-letter code: MPIKEPDVWALIWSWLQTNLSSSSAQSAFWALFISLLRFGFMRKKPAIRYVLIDAAMCASIAGVAVPICTHLFGHTEYSSFLGTMIGFVGTEKIREFLFKFINRRIEKDDNDDFRSDI.

Positions 1 to 27 (MPIKEPDVWALIWSWLQTNLSSSSAQS) are cleaved as a signal peptide.

This is an uncharacterized protein from Haemophilus influenzae (strain ATCC 51907 / DSM 11121 / KW20 / Rd).